We begin with the raw amino-acid sequence, 494 residues long: ATP synthase subunit beta, plastid (494 aa).

Residue 169 to 176 (GGAGVGKT) coordinates ATP.

The protein belongs to the ATPase alpha/beta chains family. In terms of assembly, F-type ATPases have 2 components, CF(1) - the catalytic core - and CF(0) - the membrane proton channel. CF(1) has five subunits: alpha(3), beta(3), gamma(1), delta(1), epsilon(1). CF(0) has four main subunits: a(1), b(1), b'(1) and c(9-12).

The protein localises to the plastid membrane. It catalyses the reaction ATP + H2O + 4 H(+)(in) = ADP + phosphate + 5 H(+)(out). Its function is as follows. Produces ATP from ADP in the presence of a proton gradient across the membrane. The catalytic sites are hosted primarily by the beta subunits. The chain is ATP synthase subunit beta, plastid (atpB) from Cuscuta sandwichiana (Kauna'oa).